The primary structure comprises 316 residues: Ribose-phosphate pyrophosphokinase (316 aa).

ATP is bound by residues 37–39 and 96–97; these read DGE and RQ. Positions 131 and 171 each coordinate Mg(2+). Lys-195 is an active-site residue. D-ribose 5-phosphate-binding positions include Arg-197, Asp-221, and 225–229; that span reads DTGGT.

This sequence belongs to the ribose-phosphate pyrophosphokinase family. Class I subfamily. In terms of assembly, homohexamer. Requires Mg(2+) as cofactor.

It localises to the cytoplasm. The enzyme catalyses D-ribose 5-phosphate + ATP = 5-phospho-alpha-D-ribose 1-diphosphate + AMP + H(+). It participates in metabolic intermediate biosynthesis; 5-phospho-alpha-D-ribose 1-diphosphate biosynthesis; 5-phospho-alpha-D-ribose 1-diphosphate from D-ribose 5-phosphate (route I): step 1/1. Involved in the biosynthesis of the central metabolite phospho-alpha-D-ribosyl-1-pyrophosphate (PRPP) via the transfer of pyrophosphoryl group from ATP to 1-hydroxyl of ribose-5-phosphate (Rib-5-P). This is Ribose-phosphate pyrophosphokinase from Haemophilus ducreyi (strain 35000HP / ATCC 700724).